A 505-amino-acid chain; its full sequence is ATP synthase subunit beta (505 aa).

158–165 (GGAGVGKT) lines the ATP pocket.

This sequence belongs to the ATPase alpha/beta chains family. F-type ATPases have 2 components, CF(1) - the catalytic core - and CF(0) - the membrane proton channel. CF(1) has five subunits: alpha(3), beta(3), gamma(1), delta(1), epsilon(1). CF(0) has three main subunits: a(1), b(2) and c(9-12). The alpha and beta chains form an alternating ring which encloses part of the gamma chain. CF(1) is attached to CF(0) by a central stalk formed by the gamma and epsilon chains, while a peripheral stalk is formed by the delta and b chains.

It localises to the cell inner membrane. It carries out the reaction ATP + H2O + 4 H(+)(in) = ADP + phosphate + 5 H(+)(out). Its function is as follows. Produces ATP from ADP in the presence of a proton gradient across the membrane. The catalytic sites are hosted primarily by the beta subunits. The protein is ATP synthase subunit beta of Parabacteroides distasonis (strain ATCC 8503 / DSM 20701 / CIP 104284 / JCM 5825 / NCTC 11152).